Consider the following 453-residue polypeptide: uncharacterized protein (453 aa).

Cys74, Cys80, Cys83, and Cys162 together coordinate [4Fe-4S] cluster. 4 residues coordinate S-adenosyl-L-methionine: Gln286, Tyr315, Glu336, and Asp384. Cys411 (nucleophile) is an active-site residue.

The protein belongs to the class I-like SAM-binding methyltransferase superfamily. RNA M5U methyltransferase family.

This is an uncharacterized protein from Staphylococcus aureus (strain COL).